The chain runs to 373 residues: GDP-mannose 4,6-dehydratase (373 aa).

NADP(+) is bound by residues 10–15 (GITGQD), 65–66 (DL), 87–91 (LGAQS), and Y102. T134 is an active-site residue. Residues E136 and Y158 each act as nucleophile in the active site. The NADP(+) site is built by K162, H188, and R193.

It belongs to the NAD(P)-dependent epimerase/dehydratase family. GDP-mannose 4,6-dehydratase subfamily. It depends on NADP(+) as a cofactor.

It catalyses the reaction GDP-alpha-D-mannose = GDP-4-dehydro-alpha-D-rhamnose + H2O. Its function is as follows. Catalyzes the conversion of GDP-D-mannose to GDP-4-dehydro-6-deoxy-D-mannose. The sequence is that of GDP-mannose 4,6-dehydratase from Vibrio cholerae serotype O1 (strain ATCC 39315 / El Tor Inaba N16961).